The primary structure comprises 682 residues: Putative protein RhsE (682 aa).

Basic and acidic residues predominate over residues 348-360; it reads ENGEREKAQRRSL. The segment at 348–372 is disordered; the sequence is ENGEREKAQRRSLAETLQQEGSENG.

The protein belongs to the RHS family.

Its function is as follows. Rhs elements have a nonessential function. They may play an important role in the natural ecology of the cell. The protein is Putative protein RhsE (rhsE) of Escherichia coli (strain K12).